A 317-amino-acid chain; its full sequence is L-lactate dehydrogenase (317 aa).

NAD(+) is bound by residues Val16, Asp37, Arg42, Tyr67, and 81–82 (GA). Residues Gln84 and Arg90 each coordinate substrate. NAD(+)-binding positions include Ser103, 120-122 (AAN), and Ser145. 122-125 (NPVD) is a substrate binding site. 150–153 (DSAR) serves as a coordination point for substrate. Catalysis depends on His177, which acts as the Proton acceptor. Tyr221 carries the phosphotyrosine modification. Thr230 contacts substrate.

The protein belongs to the LDH/MDH superfamily. LDH family. Homotetramer.

It localises to the cytoplasm. The catalysed reaction is (S)-lactate + NAD(+) = pyruvate + NADH + H(+). The protein operates within fermentation; pyruvate fermentation to lactate; (S)-lactate from pyruvate: step 1/1. Catalyzes the conversion of lactate to pyruvate. The sequence is that of L-lactate dehydrogenase from Limosilactobacillus fermentum (strain NBRC 3956 / LMG 18251) (Lactobacillus fermentum).